Consider the following 116-residue polypeptide: Aspartate 1-decarboxylase (116 aa).

Serine 25 functions as the Schiff-base intermediate with substrate; via pyruvic acid in the catalytic mechanism. Serine 25 bears the Pyruvic acid (Ser) mark. Threonine 57 contacts substrate. Residue tyrosine 58 is the Proton donor of the active site. A substrate-binding site is contributed by 73–75 (GAA).

This sequence belongs to the PanD family. As to quaternary structure, heterooctamer of four alpha and four beta subunits. Requires pyruvate as cofactor. Post-translationally, is synthesized initially as an inactive proenzyme, which is activated by self-cleavage at a specific serine bond to produce a beta-subunit with a hydroxyl group at its C-terminus and an alpha-subunit with a pyruvoyl group at its N-terminus.

Its subcellular location is the cytoplasm. The enzyme catalyses L-aspartate + H(+) = beta-alanine + CO2. It functions in the pathway cofactor biosynthesis; (R)-pantothenate biosynthesis; beta-alanine from L-aspartate: step 1/1. In terms of biological role, catalyzes the pyruvoyl-dependent decarboxylation of aspartate to produce beta-alanine. This chain is Aspartate 1-decarboxylase, found in Leptospira borgpetersenii serovar Hardjo-bovis (strain JB197).